The chain runs to 109 residues: MAETLTVEVMFGGGAELLFNKVKRKEIALPPLKTFLPDSQNQNWTLKELLIWLKDNLLVEREELFLKDDSVRPGILVLINEEDWELHGQLNYELKENDKIMFISTLHGG.

Gly-109 carries the post-translational modification 1-thioglycine. A Glycyl lysine isopeptide (Gly-Lys) (interchain with K-? in acceptor proteins) cross-link involves residue Gly-109.

It belongs to the URM1 family. C-terminal thiocarboxylation occurs in 2 steps, it is first acyl-adenylated (-COAMP) via the hesA/moeB/thiF part of the MOCS3 homolog, then thiocarboxylated (-COSH) via the rhodanese domain of the MOCS3 homolog.

The protein localises to the cytoplasm. Its pathway is tRNA modification; 5-methoxycarbonylmethyl-2-thiouridine-tRNA biosynthesis. Functionally, acts as a sulfur carrier required for 2-thiolation of mcm(5)S(2)U at tRNA wobble positions of cytosolic tRNA(Lys), tRNA(Glu) and tRNA(Gln). Serves as sulfur donor in tRNA 2-thiolation reaction by being thiocarboxylated (-COSH) at its C-terminus by MOCS3. The sulfur is then transferred to tRNA to form 2-thiolation of mcm(5)S(2)U. Also acts as a ubiquitin-like protein (UBL) that is covalently conjugated via an isopeptide bond to lysine residues of target proteins. The thiocarboxylated form serves as substrate for conjugation and oxidative stress specifically induces the formation of UBL-protein conjugates. The protein is Ubiquitin-related modifier 1 homolog of Bombyx mori (Silk moth).